Here is a 153-residue protein sequence, read N- to C-terminus: Acylphosphatase-like protein MJ0553 (153 aa).

An Acylphosphatase-like domain is found at 4 to 102; sequence TYELIIYGRV…SRLSSDDILE (99 aa).

The protein is Acylphosphatase-like protein MJ0553 of Methanocaldococcus jannaschii (strain ATCC 43067 / DSM 2661 / JAL-1 / JCM 10045 / NBRC 100440) (Methanococcus jannaschii).